A 99-amino-acid polypeptide reads, in one-letter code: Small ribosomal subunit protein uS17 (99 aa).

Belongs to the universal ribosomal protein uS17 family. As to quaternary structure, part of the 30S ribosomal subunit.

Its function is as follows. One of the primary rRNA binding proteins, it binds specifically to the 5'-end of 16S ribosomal RNA. This chain is Small ribosomal subunit protein uS17, found in Thermosipho melanesiensis (strain DSM 12029 / CIP 104789 / BI429).